We begin with the raw amino-acid sequence, 388 residues long: MTQFPKTVMLLGSGELGKEVAISAQRIGCHVIACDRYADAPAMQVADQAEVLAMTDTDALLATVRRHRPDVVIPEIEALAVSALAELEQDGITVIPTARATAVTMNRDRIRDLAAGELALRSARFAYAASAEELRAEAPALGWPVVVKPVMSSSGKGQSVVDGPDGLDQAWDAAMAGARGTSPRVIVEEFLRFDLEITLLTIRQHNGETLFCAPIGHEQEHGDYQCSWQPAELSSEQLHQAQAMARTVTQNLGGVGLFGVEFFLCGDEVIFSELSPRPHDTGLVTLISQNLSEFELHLRAVLGLPIPSITTADAAASRVILAQNQMDAVSYTGVDTALQEPDTQLLLFGKPTARPGRRMGVALARGEHLAEARAKADRAAACVRVLQR.

N(1)-(5-phospho-beta-D-ribosyl)glycinamide is bound by residues 15–16 (EL) and Glu-75. ATP contacts are provided by residues Arg-107, Lys-148, 153-158 (SSGKGQ), 188-191 (EEFL), and Glu-196. The ATP-grasp domain maps to 112 to 302 (DLAAGELALR…EFELHLRAVL (191 aa)). Mg(2+)-binding residues include Glu-261 and Glu-273. Residues Asp-280, Lys-350, and 357–358 (RR) contribute to the N(1)-(5-phospho-beta-D-ribosyl)glycinamide site.

The protein belongs to the PurK/PurT family. As to quaternary structure, homodimer.

The catalysed reaction is N(1)-(5-phospho-beta-D-ribosyl)glycinamide + formate + ATP = N(2)-formyl-N(1)-(5-phospho-beta-D-ribosyl)glycinamide + ADP + phosphate + H(+). It functions in the pathway purine metabolism; IMP biosynthesis via de novo pathway; N(2)-formyl-N(1)-(5-phospho-D-ribosyl)glycinamide from N(1)-(5-phospho-D-ribosyl)glycinamide (formate route): step 1/1. Its function is as follows. Involved in the de novo purine biosynthesis. Catalyzes the transfer of formate to 5-phospho-ribosyl-glycinamide (GAR), producing 5-phospho-ribosyl-N-formylglycinamide (FGAR). Formate is provided by PurU via hydrolysis of 10-formyl-tetrahydrofolate. The protein is Formate-dependent phosphoribosylglycinamide formyltransferase of Parasynechococcus marenigrum (strain WH8102).